The primary structure comprises 734 residues: PI-PLC X-box domain-containing protein DDB_G0293730 (734 aa).

Residues 8–70 (IKNILLKIEK…ELNEKLIVEK (63 aa)) adopt a coiled-coil conformation. Positions 440–604 (KLKDRKVRNL…CIYDDLVNPL (165 aa)) constitute a PI-PLC X-box domain.

This is PI-PLC X-box domain-containing protein DDB_G0293730 from Dictyostelium discoideum (Social amoeba).